The following is a 365-amino-acid chain: Aspartate-semialdehyde dehydrogenase (365 aa).

8 residues coordinate NADP(+): threonine 12, glycine 13, serine 14, valine 15, serine 37, serine 40, leucine 85, and aspartate 86. Residue cysteine 156 is the Acyl-thioester intermediate of the active site. Glycine 188 contributes to the NADP(+) binding site. The active-site Proton acceptor is histidine 256. Residue asparagine 343 coordinates NADP(+).

The protein belongs to the aspartate-semialdehyde dehydrogenase family. As to quaternary structure, homotetramer; dimer of dimers.

Its subcellular location is the cytoplasm. The protein resides in the cytosol. It localises to the nucleus. It catalyses the reaction L-aspartate 4-semialdehyde + phosphate + NADP(+) = 4-phospho-L-aspartate + NADPH + H(+). The protein operates within amino-acid biosynthesis; L-methionine biosynthesis via de novo pathway; L-homoserine from L-aspartate: step 2/3. Its pathway is amino-acid biosynthesis; L-threonine biosynthesis; L-threonine from L-aspartate: step 2/5. With respect to regulation, inhibited by the non-competitive inhibitors phthalaldehyde and naphthalene, the competitive inhibitor 1,4-benzoquinone and derivates such as 2-chloro-3-methoxy-1,4-naphthoquinone, 2,3-dichloro-1,4-naphthoquinone, 2-chloro-1,4-naphthoquinone, 2-bromo-1,4-naphthoquinone and 2,3-dichloro-5,8-dihydroxy-1,4-naphthoquinone, and 5-aminoisoquinoline. Inhibited by vinyl sulfones. Its function is as follows. Catalyzes the NADPH-dependent formation of L-aspartate 4-semialdehyde (L-ASA) by the reductive dephosphorylation of 4-phospho-L-aspartate. Mediates the second step in the biosynthesis of amino acids that derive from aspartate (the aspartate family of amino acids), including methioinine and threonine, the latter of which is a precursor to isoleucine. The protein is Aspartate-semialdehyde dehydrogenase of Candida albicans (strain SC5314 / ATCC MYA-2876) (Yeast).